The following is a 1624-amino-acid chain: ATP-binding cassette sub-family A member 6 (1624 aa).

A helical transmembrane segment spans residues L31–A51. N-linked (GlcNAc...) asparagine glycans are attached at residues N84 and N91. 6 helical membrane passes run I222–V242, W267–T287, F297–L317, V326–V346, E356–F376, and V395–L415. The ABC transporter 1 domain occupies I478–F713. ATP is bound at residue G514–S521. A glycan (N-linked (GlcNAc...) asparagine) is linked at N576. The next 8 helical transmembrane spans lie at A854–V874, L971–H991, F1005–C1025, W1058–F1078, I1094–Y1114, W1130–F1150, L1154–L1174, and A1194–L1214. An ABC transporter 2 domain is found at L1282–R1520. G1320–S1327 is an ATP binding site.

The protein belongs to the ABC transporter superfamily. ABCA family. As to expression, widely expressed with higher expression in heart, lung, brain, spleen and testis.

It localises to the golgi apparatus membrane. In terms of biological role, probable transporter which may play a role in macrophage lipid transport and homeostasis. The polypeptide is ATP-binding cassette sub-family A member 6 (Abca6) (Mus musculus (Mouse)).